Consider the following 244-residue polypeptide: Flagellar L-ring protein (244 aa).

An N-terminal signal peptide occupies residues 1–18 (MNMRVFIFLIFAAASVSA). Cys-19 is lipidated: N-palmitoyl cysteine. Cys-19 carries S-diacylglycerol cysteine lipidation.

This sequence belongs to the FlgH family. The basal body constitutes a major portion of the flagellar organelle and consists of four rings (L,P,S, and M) mounted on a central rod.

The protein resides in the cell outer membrane. It is found in the bacterial flagellum basal body. Its function is as follows. Assembles around the rod to form the L-ring and probably protects the motor/basal body from shearing forces during rotation. The protein is Flagellar L-ring protein of Jannaschia sp. (strain CCS1).